A 218-amino-acid polypeptide reads, in one-letter code: MNQSSLLAEFGDPITRVENALQALREGRGVLLLDDEDRENEGDIIYAVESLTTVQMALMIRECSGIVCLCLTEAQADRLALPLMVVNNNSANQTAFTVSIEAKHGVTTGVSAQDRVTTIKTAANPQAKPEDLARPGHVFPLRARAGGVLARRGHTEGTVDLMQMAGLQPAGVLCELTNPDGSMAKTPEIIAFGKLHNMPVLTIEDMVQYRIQFDLKLA.

Residues 38 to 39 (RE), Asp43, 151 to 155 (RRGHT), and Glu175 contribute to the D-ribulose 5-phosphate site. Glu39 is a binding site for Mg(2+). His154 provides a ligand contact to Mg(2+).

This sequence belongs to the DHBP synthase family. In terms of assembly, homodimer. Requires Mg(2+) as cofactor. Mn(2+) serves as cofactor.

It catalyses the reaction D-ribulose 5-phosphate = (2S)-2-hydroxy-3-oxobutyl phosphate + formate + H(+). Its pathway is cofactor biosynthesis; riboflavin biosynthesis; 2-hydroxy-3-oxobutyl phosphate from D-ribulose 5-phosphate: step 1/1. Functionally, catalyzes the conversion of D-ribulose 5-phosphate to formate and 3,4-dihydroxy-2-butanone 4-phosphate. The polypeptide is 3,4-dihydroxy-2-butanone 4-phosphate synthase (Vibrio cholerae serotype O1 (strain ATCC 39541 / Classical Ogawa 395 / O395)).